The primary structure comprises 199 residues: 7-methyl-GTP pyrophosphatase (199 aa).

The active-site Proton acceptor is the D74.

Belongs to the Maf family. YceF subfamily. A divalent metal cation serves as cofactor.

The protein localises to the cytoplasm. It carries out the reaction N(7)-methyl-GTP + H2O = N(7)-methyl-GMP + diphosphate + H(+). Nucleoside triphosphate pyrophosphatase that hydrolyzes 7-methyl-GTP (m(7)GTP). May have a dual role in cell division arrest and in preventing the incorporation of modified nucleotides into cellular nucleic acids. The polypeptide is 7-methyl-GTP pyrophosphatase (Cupriavidus metallidurans (strain ATCC 43123 / DSM 2839 / NBRC 102507 / CH34) (Ralstonia metallidurans)).